Here is a 119-residue protein sequence, read N- to C-terminus: MSYFVVFAICIQACLFHNVYSQCLGRVGPGGPPLGPYGGPLGGPGYGPVGYGGCGGYGGSGIGNVAVAGELPVVGSSAVMGQVPVIGAVEFAGPACAVGSVSISGACGPTCGCGGLPYY.

Positions 1–21 are cleaved as a signal peptide; the sequence is MSYFVVFAICIQACLFHNVYS. Residues 22–55 form a left arm region; the sequence is QCLGRVGPGGPPLGPYGGPLGGPGYGPVGYGGCG. The segment at 56 to 103 is central domain; that stretch reads GYGGSGIGNVAVAGELPVVGSSAVMGQVPVIGAVEFAGPACAVGSVSI. The interval 104–119 is right arm; that stretch reads SGACGPTCGCGGLPYY.

The protein belongs to the chorion protein family.

In terms of biological role, this protein is one of many from the eggshell of the silk moth. The protein is Chorion class CA protein ERA.3 (ERA.3) of Bombyx mori (Silk moth).